We begin with the raw amino-acid sequence, 212 residues long: MNDAALPPDVSAALANGLQAQSLDADFAAPLLRYLTLLVRWNKTYNLTAVRDPREMVTRHLLDSLAMQPYIVSGTLADLGTGPGLPGIPLAITRPQLQVTLVESNGKKARFMREALRHLALGNARVAEARAEAVDEPAAYDHLTARALDTLAGIIAVGGHLLRPGGSLLAMKGVYPHEEIAALPAGWRVGEVHPLQVPGLDGERHLVVVHKD.

Residues G80, L85, 131 to 132, and R146 contribute to the S-adenosyl-L-methionine site; that span reads AE.

This sequence belongs to the methyltransferase superfamily. RNA methyltransferase RsmG family.

Its subcellular location is the cytoplasm. It catalyses the reaction guanosine(527) in 16S rRNA + S-adenosyl-L-methionine = N(7)-methylguanosine(527) in 16S rRNA + S-adenosyl-L-homocysteine. In terms of biological role, specifically methylates the N7 position of guanine in position 527 of 16S rRNA. In Xanthomonas campestris pv. campestris (strain 8004), this protein is Ribosomal RNA small subunit methyltransferase G.